A 307-amino-acid chain; its full sequence is Transaldolase (307 aa).

The active-site Schiff-base intermediate with substrate is Lys-125.

It belongs to the transaldolase family. Type 1 subfamily.

Its subcellular location is the cytoplasm. The catalysed reaction is D-sedoheptulose 7-phosphate + D-glyceraldehyde 3-phosphate = D-erythrose 4-phosphate + beta-D-fructose 6-phosphate. It participates in carbohydrate degradation; pentose phosphate pathway; D-glyceraldehyde 3-phosphate and beta-D-fructose 6-phosphate from D-ribose 5-phosphate and D-xylulose 5-phosphate (non-oxidative stage): step 2/3. Its function is as follows. Transaldolase is important for the balance of metabolites in the pentose-phosphate pathway. The sequence is that of Transaldolase from Pseudomonas aeruginosa (strain ATCC 15692 / DSM 22644 / CIP 104116 / JCM 14847 / LMG 12228 / 1C / PRS 101 / PAO1).